A 379-amino-acid chain; its full sequence is Transcription termination factor 1a, mitochondrial (379 aa).

Residues 1-37 (MASRNIWCVRRNFLFDLRDWMLQYSAEVFLKSISFRP) constitute a mitochondrion transit peptide. Interaction with DNA stretches follow at residues 151-152 (RS), 229-233 (QSTKR), 306-313 (SEKKFNDK), 337-340 (SINT), and 366-373 (SQRRYEAK).

The protein belongs to the mTERF family. In terms of assembly, monomer. Phosphoprotein with mostly four phosphate groups. While the DNA-binding activity is unaffected by the phosphorylation state, only the phosphorylated form of the protein is active for termination activity. Functioning seems to be regulated by phosphorylation. As to expression, predominantly expressed in heart and liver, with extremely low levels in other tissues. Expressed strongly in the heart and at lower levels in brain, liver and kidney.

It localises to the mitochondrion. Its function is as follows. Transcription termination factor. Binds to a 28 bp region within the tRNA(Leu(uur)) gene at a position immediately adjacent to and downstream of the 16S rRNA gene; this region comprises a tridecamer sequence critical for directing accurate termination. Binds DNA along the major grove and promotes DNA bending and partial unwinding. Promotes base flipping. Transcription termination activity appears to be polarized with highest specificity for transcripts initiated on the light strand. The polypeptide is Transcription termination factor 1a, mitochondrial (Mterf1a) (Mus musculus (Mouse)).